Reading from the N-terminus, the 451-residue chain is UDP-glucosyltransferase 74AE2 (451 aa).

His17 acts as the Proton acceptor in catalysis. Residue His17 coordinates an anthocyanidin. Asp108 acts as the Charge relay in catalysis. Thr130, Gln330, His345, Trp348, Asn349, Ser350, Glu353, Asp369, and Gln370 together coordinate UDP-alpha-D-glucose.

It belongs to the UDP-glycosyltransferase family. In terms of tissue distribution, expressed at higher levels in roots than in leaves.

It catalyses the reaction (20S)-ginsenoside C-K + UDP-alpha-D-glucose = (20S)-ginsenoside F2 + UDP + H(+). It carries out the reaction (20S)-protopanaxadiol + UDP-alpha-D-glucose = (20S)-ginsenoside Rh2 + UDP + H(+). Its pathway is secondary metabolite biosynthesis; terpenoid biosynthesis. Its function is as follows. Component of the dammarane-type triterpene saponins (e.g. PPD-type ginsenosides or panaxosides) biosynthetic pathway. Glycosyltransferase that catalyzes the biosynthesis of ginsenoside Rh2 from protopanaxadiol (PPD) and the conversion of compound K to ginsenoside F2. This Panax ginseng (Korean ginseng) protein is UDP-glucosyltransferase 74AE2.